Consider the following 532-residue polypeptide: Probable 1,4-beta-D-glucan cellobiohydrolase B (532 aa).

The first 26 residues, 1 to 26 (MLASTFSYRMYKTALILAALLGSGQA), serve as a signal peptide directing secretion. The interval 27-461 (QQVGTSQAEV…SNIKVGPIGS (435 aa)) is catalytic. Glutamate 238 (nucleophile) is an active-site residue. The active-site Proton donor is the glutamate 243. Asparagine 296 is a glycosylation site (N-linked (GlcNAc...) asparagine). Residues 462–495 (TFNSGGSNPGGGTTTTTTTQPTTTTTTAGNPGGT) form a disordered region. Residues 462–496 (TFNSGGSNPGGGTTTTTTTQPTTTTTTAGNPGGTG) form a thr-rich linker region. The span at 475–490 (TTTTTTQPTTTTTTAG) shows a compositional bias: low complexity. One can recognise a CBM1 domain in the interval 496-532 (GVAQHYGQCGGIGWTGPTTCASPYTCQKLNDYYSQCL). 2 disulfides stabilise this stretch: cysteine 504–cysteine 521 and cysteine 515–cysteine 531.

This sequence belongs to the glycosyl hydrolase 7 (cellulase C) family.

The protein resides in the secreted. The enzyme catalyses Hydrolysis of (1-&gt;4)-beta-D-glucosidic linkages in cellulose and cellotetraose, releasing cellobiose from the non-reducing ends of the chains.. In terms of biological role, the biological conversion of cellulose to glucose generally requires three types of hydrolytic enzymes: (1) Endoglucanases which cut internal beta-1,4-glucosidic bonds; (2) Exocellobiohydrolases that cut the disaccharide cellobiose from the non-reducing end of the cellulose polymer chain; (3) Beta-1,4-glucosidases which hydrolyze the cellobiose and other short cello-oligosaccharides to glucose. The sequence is that of Probable 1,4-beta-D-glucan cellobiohydrolase B (cbhB) from Aspergillus fumigatus (strain CBS 144.89 / FGSC A1163 / CEA10) (Neosartorya fumigata).